The chain runs to 259 residues: Protoheme IX farnesyltransferase (259 aa).

A run of 8 helical transmembrane segments spans residues 15-35 (LICL…NGVL), 61-81 (ATVA…TFLP), 83-103 (LTTA…TLWF), 109-129 (WGVV…ASAV), 137-157 (PLIL…ALAL), 182-202 (VCIF…WFTG), 208-228 (FAIE…LYLV), and 236-256 (AFQA…IDIC).

The protein belongs to the UbiA prenyltransferase family. Protoheme IX farnesyltransferase subfamily.

It localises to the cell inner membrane. It carries out the reaction heme b + (2E,6E)-farnesyl diphosphate + H2O = Fe(II)-heme o + diphosphate. It participates in porphyrin-containing compound metabolism; heme O biosynthesis; heme O from protoheme: step 1/1. Functionally, converts heme B (protoheme IX) to heme O by substitution of the vinyl group on carbon 2 of heme B porphyrin ring with a hydroxyethyl farnesyl side group. The protein is Protoheme IX farnesyltransferase of Geotalea uraniireducens (strain Rf4) (Geobacter uraniireducens).